The primary structure comprises 612 residues: Amyloid-beta precursor-like protein (612 aa).

The N-terminal stretch at 1 to 21 (MGPSVRPGFLVVVIGLQFVAA) is a signal peptide. The Extracellular segment spans residues 22 to 542 (SMEVNSRKFE…NLYANSHANS (521 aa)). The interval 28–122 (RKFEPMVAFI…PFRCLVGPFQ (95 aa)) is GFLD subdomain. The region spanning 28-189 (RKFEPMVAFI…SGVEFVCCPK (162 aa)) is the E1 domain. 6 disulfide bridges follow: cysteine 38-cysteine 60, cysteine 71-cysteine 116, cysteine 96-cysteine 103, cysteine 132-cysteine 187, cysteine 143-cysteine 173, and cysteine 157-cysteine 186. N-linked (GlcNAc...) asparagine glycosylation is found at asparagine 99, asparagine 108, and asparagine 150. Residues 130-189 (EHCIFDHYHDPRVCNEFDQCNETAMSKCSARGMTTQSFAMLWPCQEPGHFSGVEFVCCPK) form a cuBD subdomain region. One can recognise an E2 domain in the interval 223–419 (GDSKYMSKYA…KQVRPNIDKF (197 aa)). Disordered regions lie at residues 251–276 (ERDT…TDPK) and 437–490 (QEPT…FDSE). Composition is skewed to basic and acidic residues over residues 439-453 (PTPK…KAED) and 470-483 (KPTE…EDIK). The helical transmembrane segment at 543 to 563 (VLGIAIGGVVVFIIIVVAVVM) threads the bilayer. At 564 to 612 (LKRRTQRQRVTHGFVEVDPAASPEERHVANMQMSGYENPTYKYFEMQNQ) the chain is on the cytoplasmic side. The required for the interaction with kinesin heavy chain and for anterograde transport in axons stretch occupies residues 598 to 612 (GYENPTYKYFEMQNQ). The YENPXY motif signature appears at 599–604 (YENPTY).

The protein belongs to the APP family. In terms of assembly, interacts (via cytoplasmic domain) with kinesin heavy chain. Expressed in the cervicothoracic ganglion (stellate ganglion) (at protein level).

The protein localises to the cell membrane. It is found in the cell projection. The protein resides in the axon. In terms of biological role, acts as a kinesin I membrane receptor, thereby playing a role in axonal anterograde transport of cargo towards synapses in axons. This is Amyloid-beta precursor-like protein from Doryteuthis pealeii (Longfin inshore squid).